Reading from the N-terminus, the 284-residue chain is Tropomyosin (284 aa).

The stretch at 1 to 284 (MDAIKKKMLA…DQTFAELAGY (284 aa)) forms a coiled coil. Residues 202–213 (NNTKSLEISEQE) are compositionally biased toward polar residues. The disordered stretch occupies residues 202–223 (NNTKSLEISEQEASQREDSYEE). Positions 214-223 (ASQREDSYEE) are enriched in basic and acidic residues.

The protein belongs to the tropomyosin family. In terms of assembly, homodimer.

In terms of biological role, tropomyosin, in association with the troponin complex, plays a central role in the calcium dependent regulation of muscle contraction. The polypeptide is Tropomyosin (Haliotis rufescens (California red abalone)).